Here is a 389-residue protein sequence, read N- to C-terminus: tRNA-specific 2-thiouridylase MnmA (389 aa).

ATP contacts are provided by residues 9-16 (GMSGGVDS) and Met-35. Positions 95–97 (NPD) are interaction with target base in tRNA. The Nucleophile role is filled by Cys-100. Residues Cys-100 and Cys-196 are joined by a disulfide bond. Gly-124 contributes to the ATP binding site. Positions 146-148 (KDQ) are interaction with tRNA. Residue Cys-196 is the Cysteine persulfide intermediate of the active site. The interaction with tRNA stretch occupies residues 308–309 (RY).

This sequence belongs to the MnmA/TRMU family.

It is found in the cytoplasm. It catalyses the reaction S-sulfanyl-L-cysteinyl-[protein] + uridine(34) in tRNA + AH2 + ATP = 2-thiouridine(34) in tRNA + L-cysteinyl-[protein] + A + AMP + diphosphate + H(+). Functionally, catalyzes the 2-thiolation of uridine at the wobble position (U34) of tRNA, leading to the formation of s(2)U34. In Burkholderia ambifaria (strain MC40-6), this protein is tRNA-specific 2-thiouridylase MnmA.